Reading from the N-terminus, the 387-residue chain is Phosphoglycerate kinase (387 aa).

Substrate contacts are provided by residues 21-23 (DLN), arginine 36, 59-62 (HLGR), arginine 113, and arginine 146. ATP contacts are provided by residues lysine 197, glutamate 314, and 340–343 (GGDT).

This sequence belongs to the phosphoglycerate kinase family. In terms of assembly, monomer.

It localises to the cytoplasm. It catalyses the reaction (2R)-3-phosphoglycerate + ATP = (2R)-3-phospho-glyceroyl phosphate + ADP. Its pathway is carbohydrate degradation; glycolysis; pyruvate from D-glyceraldehyde 3-phosphate: step 2/5. The sequence is that of Phosphoglycerate kinase from Photorhabdus laumondii subsp. laumondii (strain DSM 15139 / CIP 105565 / TT01) (Photorhabdus luminescens subsp. laumondii).